The primary structure comprises 95 residues: Large ribosomal subunit protein uL24c (95 aa).

The protein belongs to the universal ribosomal protein uL24 family. Part of the 50S ribosomal subunit.

Its subcellular location is the plastid. It localises to the chloroplast. One of two assembly initiator proteins, it binds directly to the 5'-end of the 23S rRNA, where it nucleates assembly of the 50S subunit. The sequence is that of Large ribosomal subunit protein uL24c (rpl24) from Porphyra purpurea (Red seaweed).